The following is a 513-amino-acid chain: 2-isopropylmalate synthase (513 aa).

The Pyruvate carboxyltransferase domain maps to 5–267; that stretch reads LVIFDTTLRD…ETRIDTTQIV (263 aa). Asp14, His202, His204, and Asn238 together coordinate Mn(2+). The interval 393–513 is regulatory domain; the sequence is KLVYSRVCSE…LDKVKAQGGV (121 aa).

The protein belongs to the alpha-IPM synthase/homocitrate synthase family. LeuA type 1 subfamily. As to quaternary structure, homodimer. It depends on Mn(2+) as a cofactor.

It localises to the cytoplasm. It carries out the reaction 3-methyl-2-oxobutanoate + acetyl-CoA + H2O = (2S)-2-isopropylmalate + CoA + H(+). The protein operates within amino-acid biosynthesis; L-leucine biosynthesis; L-leucine from 3-methyl-2-oxobutanoate: step 1/4. In terms of biological role, catalyzes the condensation of the acetyl group of acetyl-CoA with 3-methyl-2-oxobutanoate (2-ketoisovalerate) to form 3-carboxy-3-hydroxy-4-methylpentanoate (2-isopropylmalate). In Dechloromonas aromatica (strain RCB), this protein is 2-isopropylmalate synthase.